The following is a 419-amino-acid chain: Multifunctional CCA protein (419 aa).

2 residues coordinate ATP: Gly-8 and Arg-11. CTP contacts are provided by Gly-8 and Arg-11. 2 residues coordinate Mg(2+): Asp-21 and Asp-23. ATP is bound by residues Arg-91, Arg-141, and Arg-144. Residues Arg-91, Arg-141, and Arg-144 each coordinate CTP. The HD domain occupies 230–331 (TGVHVMMVLD…VRLLERCDAL (102 aa)).

It belongs to the tRNA nucleotidyltransferase/poly(A) polymerase family. Bacterial CCA-adding enzyme type 1 subfamily. As to quaternary structure, monomer. Can also form homodimers and oligomers. The cofactor is Mg(2+). Ni(2+) serves as cofactor.

It carries out the reaction a tRNA precursor + 2 CTP + ATP = a tRNA with a 3' CCA end + 3 diphosphate. The catalysed reaction is a tRNA with a 3' CCA end + 2 CTP + ATP = a tRNA with a 3' CCACCA end + 3 diphosphate. Catalyzes the addition and repair of the essential 3'-terminal CCA sequence in tRNAs without using a nucleic acid template. Adds these three nucleotides in the order of C, C, and A to the tRNA nucleotide-73, using CTP and ATP as substrates and producing inorganic pyrophosphate. tRNA 3'-terminal CCA addition is required both for tRNA processing and repair. Also involved in tRNA surveillance by mediating tandem CCA addition to generate a CCACCA at the 3' terminus of unstable tRNAs. While stable tRNAs receive only 3'-terminal CCA, unstable tRNAs are marked with CCACCA and rapidly degraded. This Paracidovorax citrulli (strain AAC00-1) (Acidovorax citrulli) protein is Multifunctional CCA protein.